A 548-amino-acid chain; its full sequence is MVLAELYVSDREGSDATGDGTKEKPFKTGLKALMTVGKEPFPTIYVDSQKENERWNVISKSQLKNIKKMWHREQMKSESREKKEAEDSLRREKNLEEAKKITIKNDPSLPEPKCVKIGALEGYRGQRVKVFGWVHRLRRQGKNLMFLVLRDGTGYLQCVLADELCQCYNGVLLSTESSVAVYGMLNLTPKGKQAPGGHELSCDFWELIGLAPAGGADNLINEESDVDVQLNNRHMMIRGENMSKILKARSMVTRCFRDHFFDRGYYEVTPPTLVQTQVEGGATLFKLDYFGEEAFLTQSSQLYLETCLPALGDVFCIAQSYRAEQSRTRRHLAEYTHVEAECPFLTFDDLLNRLEDLVCDVVDRILKSPAGSIVHELNPNFQPPKRPFKRMNYSDAIVWLKEHDVKKEDGTFYEFGEDIPEAPERLMTDTINEPILLCRFPVEIKSFYMQRCPEDSRLTESVDVLMPNVGEIVGGSMRIFDSEEILAGYKREGIDPTPYYWYTDQRKYGTCPHGGYGLGLERFLTWILNRYHIRDVCLYPRFVQRCTP.

The interval 1–25 (MVLAELYVSDREGSDATGDGTKEKP) is disordered. Residues 8-25 (VSDREGSDATGDGTKEKP) show a composition bias toward basic and acidic residues. The residue at position 61 (serine 61) is a Phosphoserine. Positions 69-91 (MWHREQMKSESREKKEAEDSLRR) are disordered. The span at 71-91 (HREQMKSESREKKEAEDSLRR) shows a compositional bias: basic and acidic residues. Residue lysine 244 is modified to N6-acetyllysine. Serine 482 is subject to Phosphoserine. Lysine 490 carries the N6-acetyllysine modification.

Belongs to the class-II aminoacyl-tRNA synthetase family. In terms of assembly, homodimer.

Its subcellular location is the cytoplasm. The enzyme catalyses tRNA(Asn) + L-asparagine + ATP = L-asparaginyl-tRNA(Asn) + AMP + diphosphate + H(+). Catalyzes the attachment of asparagine to tRNA(Asn) in a two-step reaction: asparagine is first activated by ATP to form Asn-AMP and then transferred to the acceptor end of tRNA(Asn). In addition to its essential role in protein synthesis, acts as a signaling molecule that induced migration of CCR3-expressing cells. Has an essential role in the development of the cerebral cortex, being required for proper proliferation of radial glial cells. The protein is Asparagine--tRNA ligase, cytoplasmic of Homo sapiens (Human).